Consider the following 585-residue polypeptide: Aspartate--tRNA(Asp/Asn) ligase (585 aa).

An L-aspartate-binding site is contributed by Glu175. An aspartate region spans residues 199 to 202 (QLFK). Arg221 contributes to the L-aspartate binding site. ATP is bound by residues 221 to 223 (RDE) and Gln230. His448 is a binding site for L-aspartate. Glu482 is an ATP binding site. Arg489 serves as a coordination point for L-aspartate. Residue 534 to 537 (GLDR) participates in ATP binding.

The protein belongs to the class-II aminoacyl-tRNA synthetase family. Type 1 subfamily. Homodimer.

The protein resides in the cytoplasm. The catalysed reaction is tRNA(Asx) + L-aspartate + ATP = L-aspartyl-tRNA(Asx) + AMP + diphosphate. Aspartyl-tRNA synthetase with relaxed tRNA specificity since it is able to aspartylate not only its cognate tRNA(Asp) but also tRNA(Asn). Reaction proceeds in two steps: L-aspartate is first activated by ATP to form Asp-AMP and then transferred to the acceptor end of tRNA(Asp/Asn). The protein is Aspartate--tRNA(Asp/Asn) ligase of Natranaerobius thermophilus (strain ATCC BAA-1301 / DSM 18059 / JW/NM-WN-LF).